Here is a 229-residue protein sequence, read N- to C-terminus: Multiple organellar RNA editing factor 5, chloroplastic/mitochondrial (229 aa).

The transit peptide at 1-57 (MAKTLARSTASRITKRLISTSGATTPSPSYILSRRSTPVFSHAVGFISSLNRFTTIR) directs the protein to the chloroplast and mitochondrion.

This sequence belongs to the MORF family. In terms of assembly, homodimer and heterodimers with MORF8/RIP1, MORF3/RIP3, MORF6/RIP6, MORF7/RIP7 and MORF9/RIP9.

The protein resides in the mitochondrion. Its subcellular location is the plastid. The protein localises to the chloroplast. Its function is as follows. Involved in organellar RNA editing. Required for the processing of few RNA editing sites in mitochondria. The polypeptide is Multiple organellar RNA editing factor 5, chloroplastic/mitochondrial (Arabidopsis thaliana (Mouse-ear cress)).